The sequence spans 776 residues: Intermediate filament protein ifp-1 (776 aa).

The head stretch occupies residues 1–23; the sequence is MDSANARDCLLHLARAKLSERQD. Positions 20–371 constitute an IF rod domain; it reads ERQDLVQLND…ELLDRSGDPR (352 aa). The coil 1A stretch occupies residues 24–55; it reads LVQLNDQFVDIIEHVHYMEAEHTALEHDYNLL. The tract at residues 56–69 is linker 1; that stretch reads KSGVQSDSSGINEI. The coil 1B stretch occupies residues 70 to 207; that stretch reads YNVEIRTVRS…EDNKKIIMNE (138 aa). Residues 208–224 form a linker 12 region; the sequence is HKYFVRDRNADRHVFRD. A coil 2 region spans residues 225-620; the sequence is QLRKAIADIR…QRGPHHSSYH (396 aa). 2 disordered regions span residues 453 to 473 and 518 to 544; these read ASPI…DSRS and NTTQ…SERR. Over residues 518-536 the composition is skewed to polar residues; that stretch reads NTTQINNPYASRTPTSSVN. Residues 621–768 form a tail region; that stretch reads AATGSVSNSI…WFVYTSNTEI (148 aa). In terms of domain architecture, LTD spans 653–764; it reads NFQRFTRWYK…EVKSWFVYTS (112 aa).

This sequence belongs to the intermediate filament family.

The protein resides in the cytoplasm. In terms of biological role, cytoplasmic intermediate filaments provide mechanical strength to cells. Not essential protein. This chain is Intermediate filament protein ifp-1 (ifp-1), found in Caenorhabditis elegans.